The following is a 421-amino-acid chain: O-glycosyltransferase braB (421 aa).

The tract at residues 1–26 (MVPSVMEGAPQLGITSTDTSSAGVPP) is disordered. Residues 13–22 (GITSTDTSSA) show a composition bias toward polar residues.

The protein belongs to the afumC glycosyltransferase family.

It functions in the pathway secondary metabolite biosynthesis. O-glycosyltransferase; part of the gene cluster that mediates the biosynthesis of the brasilane terpene glycosides brasilane D and E. The biosynthesis starts with the activity of the terpene cyclase braA that converts farnesyl pyrophosphate into the sesquiterpene alcohol trichobrasilenol. Subsequently, trichobrasilenol is glycosylated by the O-glycosyltransferase braB putatively using UDP-GlcNAc as sugar donor to yield brasilane A. The latter then undergoes two rounds of oxidation performed by the cytochrome P450 monooxygenase braC. In the first round braC hydroxylates C-12 forming brasilane D, which serves as substrate in the second round to establish the epoxide at the bond between C-5 and C-10 and oxidize the alcohol at C-12 to an aldehyde leading to the final product brasilane E. BraB is also able to glycosylate geraniol, linalool, perillyl alcohol, 3,4-dichlorophenol and, to a lesser extend, benzyl alcohol. The polypeptide is O-glycosyltransferase braB (Annulohypoxylon truncatum (Hypoxylon truncatum)).